Reading from the N-terminus, the 229-residue chain is Triosephosphate isomerase (229 aa).

Residue 6–8 coordinates substrate; that stretch reads NLK. Residue histidine 85 is the Electrophile of the active site. The active-site Proton acceptor is the glutamate 152. Substrate-binding residues include glycine 158 and serine 188.

Belongs to the triosephosphate isomerase family. Homodimer.

The protein resides in the cytoplasm. It catalyses the reaction D-glyceraldehyde 3-phosphate = dihydroxyacetone phosphate. It functions in the pathway carbohydrate biosynthesis; gluconeogenesis. The protein operates within carbohydrate degradation; glycolysis; D-glyceraldehyde 3-phosphate from glycerone phosphate: step 1/1. Involved in the gluconeogenesis. Catalyzes stereospecifically the conversion of dihydroxyacetone phosphate (DHAP) to D-glyceraldehyde-3-phosphate (G3P). The polypeptide is Triosephosphate isomerase (Campylobacter curvus (strain 525.92)).